Consider the following 397-residue polypeptide: Growth-regulating factor 1 (397 aa).

Residues 18-53 (PFTASQWQELEHQALIYKYMASGTPIPSDLILPLRR) form the QLQ domain. 2 consecutive short sequence motifs (bipartite nuclear localization signal) follow at residues 86–105 (RKAE…KKWR) and 123–130 (RGKNRSRK). One can recognise a WRC domain in the interval 90–134 (DPEPGRCRRTDGKKWRCSKEAYPDSKYCEKHMHRGKNRSRKPVEM). A disordered region spans residues 117-176 (CEKHMHRGKNRSRKPVEMSLATPPPPSSSATSAASNTSAGVAPTTTTTSSPAPSYSRPAP). Over residues 120–129 (HMHRGKNRSR) the composition is skewed to basic residues. Positions 144–174 (SSATSAASNTSAGVAPTTTTTSSPAPSYSRP) are enriched in low complexity.

Belongs to the GRF family.

It localises to the nucleus. Its function is as follows. Transcription activator that plays a regulatory role in gibberellin-induced stem elongation. In Oryza sativa subsp. japonica (Rice), this protein is Growth-regulating factor 1 (GRF1).